A 179-amino-acid chain; its full sequence is Large ribosomal subunit protein uL5 (179 aa).

This sequence belongs to the universal ribosomal protein uL5 family. In terms of assembly, part of the 50S ribosomal subunit; part of the 5S rRNA/L5/L18/L25 subcomplex. Contacts the 5S rRNA and the P site tRNA. Forms a bridge to the 30S subunit in the 70S ribosome.

Its function is as follows. This is one of the proteins that bind and probably mediate the attachment of the 5S RNA into the large ribosomal subunit, where it forms part of the central protuberance. In the 70S ribosome it contacts protein S13 of the 30S subunit (bridge B1b), connecting the 2 subunits; this bridge is implicated in subunit movement. Contacts the P site tRNA; the 5S rRNA and some of its associated proteins might help stabilize positioning of ribosome-bound tRNAs. The sequence is that of Large ribosomal subunit protein uL5 from Proteus mirabilis (strain HI4320).